The chain runs to 524 residues: MKEIKKTMTKQMTARRDDTPLHTAVREGKTDLLLEMIGEHDGVELKELLAEQNQSGETALYVAAEYGYTDMVKILMKHSDSVLAGTKAKNGFDAFHIAAKNGNLQVLDVLIEANPELSFTFDSSKTTALHTAASQGHGEIVCFLLDKGVDLAAIARSNGKTALHSAARNGHTVIVKKLIEKKAGMVTRVDKKGQTALHMAVKGQNTEIVDVLMEADGSLINSADNKGNTPLHIAVRKNRAEIVQTVLKYCEVSRVAVNKSGETALDIAEKTGLHEIVPLLQKIGMQNARSIKPAEKVEPSGSSRKLKETVSEIGHEVHTQLEQTGRTRREIQGIAKRVNKMHTEGLNNAINSTTLVAILIATVAFAAIFNVPGQYTDDPKDVPPGYSLGEARAAPRPEFLIFVVFDSFALFISLAVVVVQTSVVVIERRAKKQMMAIINKLMWMACIMISVAFVSLSFVVVGEKEKPLAVGVTAIGALIMVSTLGTMCYWVIANRIEGSKSSPASMMSDPELADSKHNRKLYAV.

ANK repeat units lie at residues 16-45, 55-84, 90-119, 124-153, 158-187, 192-222, 226-255, and 260-289; these read RDDT…GVEL, SGET…SVLA, NGFD…ELSF, SKTT…DLAA, NGKT…GMVT, KGQT…LINS, KGNT…VSRV, and SGET…QNAR. Transmembrane regions (helical) follow at residues 349–369, 399–419, 441–461, and 472–492; these read AINS…AAIF, FLIF…VVVV, LMWM…FVVV, and VTAI…YWVI. Serine 508 is subject to Phosphoserine.

Its subcellular location is the membrane. The sequence is that of Ankyrin repeat-containing protein At5g02620 from Arabidopsis thaliana (Mouse-ear cress).